A 351-amino-acid chain; its full sequence is UDP-3-O-acylglucosamine N-acyltransferase (351 aa).

The active-site Proton acceptor is the histidine 240.

Belongs to the transferase hexapeptide repeat family. LpxD subfamily. As to quaternary structure, homotrimer.

It carries out the reaction a UDP-3-O-[(3R)-3-hydroxyacyl]-alpha-D-glucosamine + a (3R)-hydroxyacyl-[ACP] = a UDP-2-N,3-O-bis[(3R)-3-hydroxyacyl]-alpha-D-glucosamine + holo-[ACP] + H(+). It participates in bacterial outer membrane biogenesis; LPS lipid A biosynthesis. Functionally, catalyzes the N-acylation of UDP-3-O-acylglucosamine using 3-hydroxyacyl-ACP as the acyl donor. Is involved in the biosynthesis of lipid A, a phosphorylated glycolipid that anchors the lipopolysaccharide to the outer membrane of the cell. This chain is UDP-3-O-acylglucosamine N-acyltransferase, found in Pseudomonas putida (strain ATCC 47054 / DSM 6125 / CFBP 8728 / NCIMB 11950 / KT2440).